The chain runs to 844 residues: Beta-mannosidase B (844 aa).

The active-site Proton donor is the glutamate 432. A glycan (N-linked (GlcNAc...) asparagine) is linked at asparagine 723.

The protein belongs to the glycosyl hydrolase 2 family. Beta-mannosidase B subfamily.

The catalysed reaction is Hydrolysis of terminal, non-reducing beta-D-mannose residues in beta-D-mannosides.. Its pathway is glycan metabolism; N-glycan degradation. Exoglycosidase that cleaves the single beta-linked mannose residue from the non-reducing end of beta-mannosidic oligosaccharides of various complexity and length. Prefers mannobiose over mannotriose and has no activity against polymeric mannan. Is also severely restricted by galactosyl substitutions at the +1 subsite. In Aspergillus niger (strain ATCC MYA-4892 / CBS 513.88 / FGSC A1513), this protein is Beta-mannosidase B (mndB).